The chain runs to 533 residues: Protein mono-ADP-ribosyltransferase PARP3 (533 aa).

The interval 1 to 30 is disordered; it reads MAPKPKPWVQTEGPEKKKGRQAGREEDPFR. Lys6 carries the N6-(ADP-ribosyl)lysine modification. An ADP-ribosyl glutamic acid mark is found at Glu12, Glu15, Glu26, and Glu34. The short motif at 14 to 20 is the Nuclear localization signal element; sequence PEKKKGR. Lys37 is modified (N6-(ADP-ribosyl)lysine). The region spanning 59-150 is the WGR domain; it reads GTQVYEDYNC…DHFVSHPGKY (92 aa). Asp141 carries the post-translational modification ADP-ribosyl aspartic acid. Glu163 bears the ADP-ribosyl glutamic acid mark. In terms of domain architecture, PARP alpha-helical spans 182–300; it reads PCSLDPATQK…DIELAQALQA (119 aa). An ADP-ribosyl aspartic acid modification is found at Asp210. ADP-ribosyl glutamic acid is present on residues Glu231, Glu309, Glu310, Glu344, and Glu449. The 221-residue stretch at 313–533 folds into the PARP catalytic domain; that stretch reads HPLDRDYQLL…RLRYLLEVHL (221 aa). Positions 454–482 are disordered; it reads TDNPSLKSPPPGFDSVIARGHTEPDPTQD.

The protein belongs to the ARTD/PARP family. Interacts with PARP1; leading to activate PARP1 in absence of DNA. Interacts with PRKDC. Interacts with XRCC5/Ku80; the interaction is dependent on nucleic acids. Interacts with XRCC6/Ku70; the interaction is dependent on nucleic acids. Interacts with EZH2, HDAC1, HDAC2, SUZ12, YY1, LRIG3 and LIG4. In terms of processing, auto-mono-ADP-ribosylated. As to expression, widely expressed; the highest levels are in the kidney, skeletal muscle, liver, heart and spleen; also detected in pancreas, lung, placenta, brain, leukocytes, colon, small intestine, ovary, testis, prostate and thymus.

Its subcellular location is the nucleus. The protein resides in the chromosome. It is found in the cytoplasm. It localises to the cytoskeleton. The protein localises to the microtubule organizing center. Its subcellular location is the centrosome. The protein resides in the centriole. The catalysed reaction is L-aspartyl-[protein] + NAD(+) = 4-O-(ADP-D-ribosyl)-L-aspartyl-[protein] + nicotinamide. It catalyses the reaction L-glutamyl-[protein] + NAD(+) = 5-O-(ADP-D-ribosyl)-L-glutamyl-[protein] + nicotinamide. It carries out the reaction L-lysyl-[protein] + NAD(+) = N(6)-(ADP-D-ribosyl)-L-lysyl-[protein] + nicotinamide + H(+). With respect to regulation, mono-ADP-ribosyltransferase activity of PARP3 is selectively inhibited by ME0328 compound; ME0328 does not inhibit other ARTD/PARP enzymes, such as PARP1. Mono-ADP-ribosyltransferase is strongly inhibited by KU0058948 compound. Functionally, mono-ADP-ribosyltransferase that mediates mono-ADP-ribosylation of target proteins and plays a key role in the response to DNA damage. Mediates mono-ADP-ribosylation of glutamate, aspartate or lysine residues on target proteins. In contrast to PARP1 and PARP2, it is not able to mediate poly-ADP-ribosylation. Involved in DNA repair by mediating mono-ADP-ribosylation of a limited number of acceptor proteins involved in chromatin architecture and in DNA metabolism, such as histone H2B, XRCC5 and XRCC6. ADP-ribosylation follows DNA damage and appears as an obligatory step in a detection/signaling pathway leading to the reparation of DNA strand breaks. Involved in single-strand break repair by catalyzing mono-ADP-ribosylation of histone H2B on 'Glu-2' (H2BE2ADPr) of nucleosomes containing nicked DNA. Cooperates with the XRCC5-XRCC6 (Ku80-Ku70) heterodimer to limit end-resection thereby promoting accurate NHEJ. Suppresses G-quadruplex (G4) structures in response to DNA damage. Associates with a number of DNA repair factors and is involved in the response to exogenous and endogenous DNA strand breaks. Together with APLF, promotes the retention of the LIG4-XRCC4 complex on chromatin and accelerate DNA ligation during non-homologous end-joining (NHEJ). May link the DNA damage surveillance network to the mitotic fidelity checkpoint. Acts as a negative regulator of immunoglobulin class switch recombination, probably by controlling the level of AICDA /AID on the chromatin. In addition to proteins, also able to ADP-ribosylate DNA: mediates DNA mono-ADP-ribosylation of DNA strand break termini via covalent addition of a single ADP-ribose moiety to a 5'- or 3'-terminal phosphate residues in DNA containing multiple strand breaks. This is Protein mono-ADP-ribosyltransferase PARP3 from Homo sapiens (Human).